We begin with the raw amino-acid sequence, 481 residues long: Probable glycine dehydrogenase (decarboxylating) subunit 2 (481 aa).

Residues Met1–Ile26 form a disordered region. Residue Lys263 is modified to N6-(pyridoxal phosphate)lysine.

This sequence belongs to the GcvP family. C-terminal subunit subfamily. The glycine cleavage system is composed of four proteins: P, T, L and H. In this organism, the P 'protein' is a heterodimer of two subunits. It depends on pyridoxal 5'-phosphate as a cofactor.

The catalysed reaction is N(6)-[(R)-lipoyl]-L-lysyl-[glycine-cleavage complex H protein] + glycine + H(+) = N(6)-[(R)-S(8)-aminomethyldihydrolipoyl]-L-lysyl-[glycine-cleavage complex H protein] + CO2. In terms of biological role, the glycine cleavage system catalyzes the degradation of glycine. The P protein binds the alpha-amino group of glycine through its pyridoxal phosphate cofactor; CO(2) is released and the remaining methylamine moiety is then transferred to the lipoamide cofactor of the H protein. This Francisella tularensis subsp. mediasiatica (strain FSC147) protein is Probable glycine dehydrogenase (decarboxylating) subunit 2.